A 326-amino-acid chain; its full sequence is H-2 class I histocompatibility antigen, Q8 alpha chain (326 aa).

The signal sequence occupies residues 1–21 (MALTMLLLLVAAALTLIETRA). Positions 22–111 (GPHSLRYFHT…AQRYYNQSKG (90 aa)) are alpha-1. The Extracellular segment spans residues 22–305 (GPHSLRYFHT…EPPPSTVSNM (284 aa)). A glycan (N-linked (GlcNAc...) asparagine) is linked at N107. Positions 112 to 203 (GSHTLQWMYG…QLRKETLLCT (92 aa)) are alpha-2. 2 disulfide bridges follow: C122-C185 and C224-C280. The tract at residues 204 to 295 (DPPKAHVTHH…GLPEPLTLRW (92 aa)) is alpha-3. The region spanning 206–294 (PKAHVTHHPR…EGLPEPLTLR (89 aa)) is the Ig-like C1-type domain. The N-linked (GlcNAc...) asparagine glycan is linked to N277. Positions 296–305 (EPPPSTVSNM) are connecting peptide. Residues 306 to 326 (ANVAILVVLVAWPSLELWWIL) traverse the membrane as a helical segment.

Belongs to the MHC class I family. As to quaternary structure, heterodimer of an alpha chain and a beta chain (beta-2-microglobulin).

It is found in the membrane. Functionally, involved in the presentation of foreign antigens to the immune system. The protein is H-2 class I histocompatibility antigen, Q8 alpha chain (H2-Q8) of Mus musculus (Mouse).